Consider the following 119-residue polypeptide: uncharacterized protein (119 aa).

Helical transmembrane passes span 19–39 (FYPS…PSFL) and 68–88 (FPWF…PWLL).

It localises to the membrane. This is an uncharacterized protein from Saccharomyces cerevisiae (strain ATCC 204508 / S288c) (Baker's yeast).